The following is a 438-amino-acid chain: Enolase (438 aa).

Gln174 contributes to the (2R)-2-phosphoglycerate binding site. Catalysis depends on Glu216, which acts as the Proton donor. Residues Asp253, Glu297, and Asp324 each coordinate Mg(2+). (2R)-2-phosphoglycerate-binding residues include Lys349, Arg378, Ser379, and Lys400. The Proton acceptor role is filled by Lys349.

Belongs to the enolase family. Component of the RNA degradosome, a multiprotein complex involved in RNA processing and mRNA degradation. Mg(2+) is required as a cofactor.

Its subcellular location is the cytoplasm. It is found in the secreted. The protein resides in the cell surface. The enzyme catalyses (2R)-2-phosphoglycerate = phosphoenolpyruvate + H2O. Its pathway is carbohydrate degradation; glycolysis; pyruvate from D-glyceraldehyde 3-phosphate: step 4/5. Functionally, catalyzes the reversible conversion of 2-phosphoglycerate (2-PG) into phosphoenolpyruvate (PEP). It is essential for the degradation of carbohydrates via glycolysis. This Psychrobacter arcticus (strain DSM 17307 / VKM B-2377 / 273-4) protein is Enolase.